The following is a 365-amino-acid chain: MSVLKNDRLLRALQRQPVDRTPVWMMRQAGRYLPEYRELRAQAGSFMKLAGTPELACEVTLQPLRRFPLDAAILFSDILTIPDAMGLGLRFLPGEGPVFDHPVRSAADIEHLPVPDPEDELRYVTDAVRLIRRELDGEVPLIGFAGSPWTLATYMIEGGSSKDYRRCKAMLYDEPELLHRLLDKVAQATTAYLNAQIAAGAQAIMIFDSWGGALAHDAYRLFSLAYMERIVRNLTREADGRHVPVVLFTKGGGQWLEAMAATGCDGLGLDWTTNLGQARDRVGDRVALQGNLDPCVLYASPETIRNEVARVLADYGPGPGHVFNLGHGIHPAIPPEHAGAMIDAVHQLSPRYHEQQAEASSLTQG.

Residues 27 to 31 (RQAGR), Asp-77, Tyr-154, Ser-209, and His-327 contribute to the substrate site.

It belongs to the uroporphyrinogen decarboxylase family. In terms of assembly, homodimer.

The protein resides in the cytoplasm. The catalysed reaction is uroporphyrinogen III + 4 H(+) = coproporphyrinogen III + 4 CO2. It functions in the pathway porphyrin-containing compound metabolism; protoporphyrin-IX biosynthesis; coproporphyrinogen-III from 5-aminolevulinate: step 4/4. Catalyzes the decarboxylation of four acetate groups of uroporphyrinogen-III to yield coproporphyrinogen-III. This Alkalilimnicola ehrlichii (strain ATCC BAA-1101 / DSM 17681 / MLHE-1) protein is Uroporphyrinogen decarboxylase.